Reading from the N-terminus, the 191-residue chain is Probable molybdenum cofactor guanylyltransferase (191 aa).

GTP contacts are provided by residues 6 to 8 (LAG), K18, D67, and D92. Residue D92 participates in Mg(2+) binding.

The protein belongs to the MobA family. Requires Mg(2+) as cofactor.

The protein resides in the cytoplasm. It carries out the reaction Mo-molybdopterin + GTP + H(+) = Mo-molybdopterin guanine dinucleotide + diphosphate. Functionally, transfers a GMP moiety from GTP to Mo-molybdopterin (Mo-MPT) cofactor (Moco or molybdenum cofactor) to form Mo-molybdopterin guanine dinucleotide (Mo-MGD) cofactor. The sequence is that of Probable molybdenum cofactor guanylyltransferase from Thermococcus gammatolerans (strain DSM 15229 / JCM 11827 / EJ3).